Here is a 1066-residue protein sequence, read N- to C-terminus: Pumilio homolog 2 (1066 aa).

The interaction with SNAPIN stretch occupies residues 1-260 (MNHDFQALAL…TVGLFDYNSQ (260 aa)). A phosphoserine mark is found at Ser-67, Ser-70, Ser-82, and Ser-102. Disordered stretches follow at residues 106-203 (KLDS…GPLP), 368-408 (TANQ…AESL), and 490-551 (TGST…SASL). A compositionally biased stretch (basic and acidic residues) spans 119–133 (RDAETDGPEKGDQKG). 3 positions are modified to phosphoserine: Ser-136, Ser-177, and Ser-181. At Thr-183 the chain carries Phosphothreonine. The span at 368-383 (TANQQAASQAQPGQQQ) shows a compositional bias: low complexity. A compositionally biased stretch (polar residues) spans 394 to 406 (ITPSQGQQGQQAE). Position 395 is a phosphothreonine (Thr-395). Residues 503–514 (QPPQQQQQQQQP) show a composition bias toward low complexity. Over residues 515–525 (STNLQSNSFYG) the composition is skewed to polar residues. Low complexity predominate over residues 526–540 (SSSLTNSSQSSSLFS). 2 positions are modified to phosphoserine: Ser-587 and Ser-592. The interval 620 to 650 (SPIGMPLPSQTPGHSLTPPPSLSSHGSSSSL) is disordered. Residues 630 to 650 (TPGHSLTPPPSLSSHGSSSSL) are compositionally biased toward low complexity. Arg-674 is subject to Omega-N-methylarginine. Residues Ser-684 and Ser-700 each carry the phosphoserine modification. One can recognise a PUM-HD domain in the interval 706-1048 (GRSRLLEDFR…HILAKLEKYY (343 aa)). Pumilio repeat units follow at residues 726–761 (DLIG…IVFN), 762–797 (EILQ…ALAT), 798–835 (RIRG…EMVK), 836–871 (ELDG…FIID), 872–907 (AFKG…PILE), 908–943 (ELHQ…KIVS), 944–979 (EIRG…LLID), and 980–1022 (EVCC…IIMH). Positions 741–745 (SRFIQ) are adenine-nucleotide binding in RNA target. The tract at residues 777–781 (NYVIQ) is uracil-nucleotide binding in RNA target. The adenine-nucleotide binding in RNA target stretch occupies residues 813–817 (CRVIQ). A non-specific-nucleotide binding in RNA target region spans residues 851 to 855 (NHVVQ). An adenine-nucleotide binding in RNA target region spans residues 887 to 891 (CRVIQ). The interval 923–927 (NYVIQ) is uracil-nucleotide binding in RNA target. Residues 959–963 (SNVVE) form a guanine-nucleotide binding in RNA target region. The uracil-nucleotide binding in RNA target stretch occupies residues 1002-1006 (NYVVQ).

As to quaternary structure, homodimer; homodimerizes in vitro. Interacts with DAZ1, DAZL and NANOS1 via its pumilio repeats. Interacts with NANOS3. Interacts with SNAPIN. Recruits the CCR4-POP2-NOT deadenylase leading to translational inhibition and mRNA degradation. Interacts with DDX20. In case of viral infection, interacts with DHX58. In terms of tissue distribution, widely expressed. Expressed in embryonic stem cells, heart, kidney, lung, skin, intestine, spleen and thymus. Expressed at intermediate level in brain and liver. Weakly or not expressed in muscles and stomach. Expressed at various stages of myeloid and lymphoid cell development. In the testis expressed in the spermatogoni, spermatocytes, spermatids and Sertoli cells.

It is found in the cytoplasm. The protein localises to the cytoplasmic granule. The protein resides in the perinuclear region. Sequence-specific RNA-binding protein that acts as a post-transcriptional repressor by binding the 3'-UTR of mRNA targets. Binds to an RNA consensus sequence, the Pumilio Response Element (PRE), 5'-UGUANAUA-3', that is related to the Nanos Response Element (NRE). Mediates post-transcriptional repression of transcripts via different mechanisms: acts via direct recruitment of the CCR4-POP2-NOT deadenylase leading to translational inhibition and mRNA degradation. Also mediates deadenylation-independent repression by promoting accessibility of miRNAs. Acts as a post-transcriptional repressor of E2F3 mRNAs by binding to its 3'-UTR and facilitating miRNA regulation. Plays a role in cytoplasmic sensing of viral infection. Represses a program of genes necessary to maintain genomic stability such as key mitotic, DNA repair and DNA replication factors. Its ability to repress those target mRNAs is regulated by the lncRNA NORAD (non-coding RNA activated by DNA damage) which, due to its high abundance and multitude of PUMILIO binding sites, is able to sequester a significant fraction of PUM1 and PUM2 in the cytoplasm. May regulate DCUN1D3 mRNA levels. May support proliferation and self-renewal of stem cells. Binds specifically to miRNA MIR199A precursor, with PUM1, regulates miRNA MIR199A expression at a postranscriptional level. The chain is Pumilio homolog 2 (Pum2) from Mus musculus (Mouse).